The primary structure comprises 315 residues: BTB/POZ domain-containing adapter for CUL3-mediated RhoA degradation protein 3 (315 aa).

An N-acetylmethionine modification is found at Met-1. Ser-23 is subject to Phosphoserine. One can recognise a BTB domain in the interval 32-100; the sequence is KYVKLNVGGA…LRDGAVPLPE (69 aa). Positions 239–245 match the Interaction with PCNA motif; it reads QTKVEFP. Residues 269–294 form a disordered region; that stretch reads NALLEATGGAAGRSHHLDEDEERERE.

It belongs to the BACURD family. In terms of assembly, homotetramer; forms a two-fold symmetric tetramer in solution. Interacts with CUL3; interaction is direct and forms a 5:5 heterodecamer. Component of the BCR(BACURD3) E3 ubiquitin ligase complex, at least composed of CUL3, KCTD10/BACURD3 and RBX1. Interacts with DNA polymerase delta subunit 2/POLD2. Interacts with PCNA. In terms of tissue distribution, expressed at highest levels in lung. Also detected in testis and heart. Very low expression, if any, in brain, liver, spleen, kidney and skeletal muscle.

It is found in the nucleus. Its pathway is protein modification; protein ubiquitination. In terms of biological role, substrate-specific adapter of a BCR (BTB-CUL3-RBX1) E3 ubiquitin-protein ligase complex. The BCR(BACURD3) E3 ubiquitin ligase complex mediates the ubiquitination of target proteins, leading to their degradation by the proteasome. The protein is BTB/POZ domain-containing adapter for CUL3-mediated RhoA degradation protein 3 (Kctd10) of Rattus norvegicus (Rat).